The following is a 291-amino-acid chain: Endo-1,4-beta-xylanase 11B (291 aa).

The first 19 residues, 1–19, serve as a signal peptide directing secretion; that stretch reads MVAFSSLFLGASIAATALA. Residues 34–222 enclose the GH11 domain; the sequence is TYTQSATGTH…SSGSARINVG (189 aa). Asparagine 93 carries N-linked (GlcNAc...) asparagine glycosylation. Glutamate 118 (nucleophile) is an active-site residue. The active-site Proton donor is glutamate 209. The tract at residues 223-246 is disordered; it reads GGSTGGGNNGGGNNGGNPGGNPGG. The CBM1 domain occupies 255-291; that stretch reads NCSPRWGQCGGQGWNGPTCCESGTTCRQQNQWYSQCL.

The protein belongs to the glycosyl hydrolase 11 (cellulase G) family.

The protein resides in the secreted. It carries out the reaction Endohydrolysis of (1-&gt;4)-beta-D-xylosidic linkages in xylans.. The protein operates within glycan degradation; xylan degradation. The activity iss completely inhibited by Hg(2+), a metal ion that interacts with Trp and oxidizes the indole ring, and is significantly enhanced by beta-mercaptoethanol, which counteracts the oxidation effects of the S-S linkage between Cys residues. Endo-1,4-beta-xylanase involved in the hydrolysis of xylan, a major structural heterogeneous polysaccharide found in plant biomass representing the second most abundant polysaccharide in the biosphere, after cellulose. Shows maximum activity on soluble wheat arabinoxylan (defined as 100%), moderate activity on birchwood xylan (80.5%) and beechwood xylan (76.2%), and weak activity on insoluble wheat arabinoxylan (7.0%). Has no activity towards glucan or carboxymethyl cellulose-sodium (CMC-Na). The sequence is that of Endo-1,4-beta-xylanase 11B from Humicola insolens (Soft-rot fungus).